A 312-amino-acid chain; its full sequence is Zinc transporter ZitB (312 aa).

A run of 6 helical transmembrane segments spans residues 16-36, 40-60, 81-101, 117-137, 153-173, and 177-197; these read LLIA…GGWL, LALL…FIAL, LTTL…ILIV, TPML…FWIL, LHVL…IVIL, and WTPI…RNAW.

It belongs to the cation diffusion facilitator (CDF) transporter (TC 2.A.4) family. SLC30A subfamily.

It localises to the cell inner membrane. Its function is as follows. Involved in zinc efflux across the cytoplasmic membrane, thus reducing zinc accumulation in the cytoplasm and rendering bacteria more resistant to zinc. It may contribute to zinc homeostasis at low concentrations of zinc. This Yersinia pseudotuberculosis serotype I (strain IP32953) protein is Zinc transporter ZitB.